Here is a 220-residue protein sequence, read N- to C-terminus: MIKIIITDDQDIVREGLASLLQLREELDVIATARNGQEAFEKAKELEPDIVLMDIRMPVSNGVEGTKLITSSLPSVKVLMLTTFKDSALIAEALEEGASGYLLKDMSADTIVKAVMTVHSGGMVLPPELTAQMLNEWKREKQLKGINEIEKPNELLDLTEREIEVLAELGYGLNNKEIAEKLYITEGTVKNHVSNIISKLAVRDRTQAAIYSVRYGVSVF.

One can recognise a Response regulatory domain in the interval 3–119; that stretch reads KIIITDDQDI…TIVKAVMTVH (117 aa). Aspartate 54 bears the 4-aspartylphosphate mark. Residues 151–216 enclose the HTH luxR-type domain; sequence KPNELLDLTE…QAAIYSVRYG (66 aa). The segment at residues 175–194 is a DNA-binding region (H-T-H motif); that stretch reads NKEIAEKLYITEGTVKNHVS.

Post-translationally, phosphorylated by LnrJ.

Its subcellular location is the cytoplasm. Functionally, required for resistance to linearmycins, a family of antibiotic-specialized metabolites produced by some streptomycetes. Member of the two-component regulatory system LnrJ/LnrK, which induces expression of the LnrLMN ABC transporter in response to linearmycins and other polyenes. Probably binds to the promoter region of the lnrLMN operon and directly regulates its expression. May also promote biofilm formation. This chain is Transcriptional regulatory protein LnrK, found in Bacillus subtilis (strain 168).